A 302-amino-acid polypeptide reads, in one-letter code: Protease HtpX homolog (302 aa).

A helical membrane pass occupies residues 27–47; the sequence is LLMAIGGIIGGTAGMLIALII. Residue His-141 participates in Zn(2+) binding. Residue Glu-142 is part of the active site. His-145 contacts Zn(2+). 2 helical membrane-spanning segments follow: residues 151 to 171 and 195 to 215; these read VLVA…ANMA and IGAI…QLAI. A Zn(2+)-binding site is contributed by Glu-220.

It belongs to the peptidase M48B family. Requires Zn(2+) as cofactor.

Its subcellular location is the cell inner membrane. In Aquifex aeolicus (strain VF5), this protein is Protease HtpX homolog.